Consider the following 129-residue polypeptide: Small ribosomal subunit protein uS11 (129 aa).

The protein belongs to the universal ribosomal protein uS11 family. Part of the 30S ribosomal subunit. Interacts with proteins S7 and S18. Binds to IF-3.

Functionally, located on the platform of the 30S subunit, it bridges several disparate RNA helices of the 16S rRNA. Forms part of the Shine-Dalgarno cleft in the 70S ribosome. In Pseudomonas fluorescens (strain SBW25), this protein is Small ribosomal subunit protein uS11.